We begin with the raw amino-acid sequence, 303 residues long: tRNA dimethylallyltransferase (303 aa).

12 to 19 (GTTASGKS) provides a ligand contact to ATP. 14-19 (TASGKS) is a substrate binding site. The interval 37 to 40 (DSRQ) is interaction with substrate tRNA.

It belongs to the IPP transferase family. As to quaternary structure, monomer. Requires Mg(2+) as cofactor.

The catalysed reaction is adenosine(37) in tRNA + dimethylallyl diphosphate = N(6)-dimethylallyladenosine(37) in tRNA + diphosphate. In terms of biological role, catalyzes the transfer of a dimethylallyl group onto the adenine at position 37 in tRNAs that read codons beginning with uridine, leading to the formation of N6-(dimethylallyl)adenosine (i(6)A). The protein is tRNA dimethylallyltransferase of Synechocystis sp. (strain ATCC 27184 / PCC 6803 / Kazusa).